Reading from the N-terminus, the 359-residue chain is NADH-quinone oxidoreductase subunit H (359 aa).

8 consecutive transmembrane segments (helical) span residues isoleucine 19–leucine 39, phenylalanine 94–leucine 114, valine 127–glycine 147, isoleucine 175–methionine 195, phenylalanine 202–isoleucine 222, phenylalanine 255–isoleucine 275, valine 301–leucine 321, and cysteine 337–isoleucine 357.

It belongs to the complex I subunit 1 family. In terms of assembly, NDH-1 is composed of 14 different subunits. Subunits NuoA, H, J, K, L, M, N constitute the membrane sector of the complex.

It localises to the cell inner membrane. The catalysed reaction is a quinone + NADH + 5 H(+)(in) = a quinol + NAD(+) + 4 H(+)(out). NDH-1 shuttles electrons from NADH, via FMN and iron-sulfur (Fe-S) centers, to quinones in the respiratory chain. The immediate electron acceptor for the enzyme in this species is believed to be ubiquinone. Couples the redox reaction to proton translocation (for every two electrons transferred, four hydrogen ions are translocated across the cytoplasmic membrane), and thus conserves the redox energy in a proton gradient. This subunit may bind ubiquinone. The chain is NADH-quinone oxidoreductase subunit H from Chlorobaculum tepidum (strain ATCC 49652 / DSM 12025 / NBRC 103806 / TLS) (Chlorobium tepidum).